Consider the following 157-residue polypeptide: Protein Smg homolog (157 aa).

The protein belongs to the Smg family.

In Aeromonas hydrophila subsp. hydrophila (strain ATCC 7966 / DSM 30187 / BCRC 13018 / CCUG 14551 / JCM 1027 / KCTC 2358 / NCIMB 9240 / NCTC 8049), this protein is Protein Smg homolog.